Consider the following 931-residue polypeptide: MLERPFFSRHIGLRPDEKQKMLDIVAVDSIDTLVSQALPHSIHLGRPLNLPKAVSEGQALEELSKMMERNYLHKSFIGQGYHGTYVPPVILRNLFENPAWYTAYTPYQAEISQGRLELLFYFQTLISELTGLPVAAASLLDEATALAEAITVAFRFTREKKMKISLQSLLHPQILSVVQTRAETQGLQVSKNSEICSDTAAIVLSWPDTKGSFNDYSEVIKEAKAKGALVIVVADPLALTLMEAPAKWGADIVVGSMQRYGVPMGFGGPHAGYLAVSDALTRLIPGRIVGQSVDTKGRVGFRLALQTREQHIRRDKATSNICTAQALLANMATAYAVWHGPQGLQEIAQRVHHLTCRFVGGLEAVGISCEGEYFFDCVSIVVKGKAREIACQAKAGGRLIRVLDDDRVVINFDELSTQEDAHALAQLFGAGLVDQASPRLMGKGRDTTFLSQPFFHAVHSETDMMRFLRRLSDKDLALDRAMIPLGSCTMKLNAAAELMPVSWPTVANIHPFASREDAVGYQEMIHQLNAWLCEITGFAQVSFQPNSGAQGEYAGLLAIRRYHQSRGEHQRTLCLIPASAHGTNPASAHMAGMEVVVVKCLNDGDVDLDDLKMKAQLYKERLAALMITYPSTHGVYEESIKDICSLIHENGGQVYFDGANLNALVGLARPADIGADVCHMNLHKTFAIPHGGGGPGVGPIGVVEHLKPFLPGHEQEGTTHAVSAAPYGSASILVITWMYIRMMGAEGLKYATQTAILNANYIAARLSQVYSILYRGKHGRVAHECIVDTRVLKEQYGVSVDDIAKRLIDYGFHAPTMSFPVPGTLMIEPTESEPKAEIDRFCDALLSIAEEAKKIGSGVWPKDDNPLVHAPHTLVDTLDDTWARPYSRQEAAFPNCSLDPANKYWPPVSRIDNVAGDRMLICSCPPLGNTY.

An N6-(pyridoxal phosphate)lysine modification is found at Lys-684.

Belongs to the GcvP family. In terms of assembly, the glycine cleavage system is composed of four proteins: P, T, L and H. It depends on pyridoxal 5'-phosphate as a cofactor.

It carries out the reaction N(6)-[(R)-lipoyl]-L-lysyl-[glycine-cleavage complex H protein] + glycine + H(+) = N(6)-[(R)-S(8)-aminomethyldihydrolipoyl]-L-lysyl-[glycine-cleavage complex H protein] + CO2. In terms of biological role, the glycine cleavage system catalyzes the degradation of glycine. The P protein binds the alpha-amino group of glycine through its pyridoxal phosphate cofactor; CO(2) is released and the remaining methylamine moiety is then transferred to the lipoamide cofactor of the H protein. In Bartonella henselae (strain ATCC 49882 / DSM 28221 / CCUG 30454 / Houston 1) (Rochalimaea henselae), this protein is Glycine dehydrogenase (decarboxylating).